The following is a 118-amino-acid chain: Large ribosomal subunit protein bL19 (118 aa).

Belongs to the bacterial ribosomal protein bL19 family.

This protein is located at the 30S-50S ribosomal subunit interface and may play a role in the structure and function of the aminoacyl-tRNA binding site. This is Large ribosomal subunit protein bL19 (rplS) from Serratia marcescens.